A 384-amino-acid chain; its full sequence is MGIHKLMDLLKEKAPGCIKTSDLKFYAGRMIACDASMAMYQFLATTSSASDFQIQNLTDKDGNKTGHLVGLLNRTVMLIENGLKPVWVFDGKPPQFKSGELARRQKAKDEAAEKQKTAIETGDMQEALKQEQRNLHITKEMKADAIKLLQLVGVPVILAPCEAEAQCAALAKAKKVFATVTEDMDALTFATPFLLRNLNSKKEPITEINYEKMLQELKLSHNEFVDLCILCGCDYLGRIEGVGPVNAFKLITEHKSLEKVLEHMEEVNKQSTKKQKYTVPSSYDYVSARDLFINPEVTDPETIQLEWKKPDVEELKKFLVEEKGFSEQRVTSQMEKVLNAKEHKGSQTRLNDFFKVQPKDTSSTSKASKKPTNTKSANKKGGKK.

Residues 1–108 (MGIHKLMDLL…GELARRQKAK (108 aa)) form an N-domain region. Asp34 contacts Mg(2+). Arg74 is a binding site for DNA. Residues Asp90, Glu162, Glu164, Asp183, and Asp185 each coordinate Mg(2+). The segment at 126–254 (EALKQEQRNL…VNAFKLITEH (129 aa)) is I-domain. Glu162 contributes to the DNA binding site. Gly232 and Asp234 together coordinate DNA. Asp234 is a Mg(2+) binding site. Positions 340 to 384 (AKEHKGSQTRLNDFFKVQPKDTSSTSKASKKPTNTKSANKKGGKK) are disordered. Residues 346–354 (SQTRLNDFF) form an interaction with PCNA region. Low complexity predominate over residues 359-376 (KDTSSTSKASKKPTNTKS).

It belongs to the XPG/RAD2 endonuclease family. FEN1 subfamily. As to quaternary structure, interacts with PCNA. Three molecules of FEN1 bind to one PCNA trimer with each molecule binding to one PCNA monomer. PCNA stimulates the nuclease activity without altering cleavage specificity. Mg(2+) serves as cofactor. Post-translationally, phosphorylated. Phosphorylation upon DNA damage induces relocalization to the nuclear plasma.

Its subcellular location is the nucleus. The protein localises to the nucleolus. It is found in the nucleoplasm. The protein resides in the mitochondrion. Its function is as follows. Structure-specific nuclease with 5'-flap endonuclease and 5'-3' exonuclease activities involved in DNA replication and repair. During DNA replication, cleaves the 5'-overhanging flap structure that is generated by displacement synthesis when DNA polymerase encounters the 5'-end of a downstream Okazaki fragment. It enters the flap from the 5'-end and then tracks to cleave the flap base, leaving a nick for ligation. Also involved in the long patch base excision repair (LP-BER) pathway, by cleaving within the apurinic/apyrimidinic (AP) site-terminated flap. Acts as a genome stabilization factor that prevents flaps from equilibrating into structures that lead to duplications and deletions. Also possesses 5'-3' exonuclease activity on nicked or gapped double-stranded DNA, and exhibits RNase H activity. Also involved in replication and repair of rDNA and in repairing mitochondrial DNA. This chain is Flap endonuclease 1, found in Tetrahymena thermophila (strain SB210).